We begin with the raw amino-acid sequence, 143 residues long: Deoxyuridine 5'-triphosphate nucleotidohydrolase (143 aa).

Substrate contacts are provided by residues 63-65 (RSG), N76, 80-82 (TID), and K90.

The protein belongs to the dUTPase family. Requires Mg(2+) as cofactor.

It catalyses the reaction dUTP + H2O = dUMP + diphosphate + H(+). It participates in pyrimidine metabolism; dUMP biosynthesis; dUMP from dCTP (dUTP route): step 2/2. In terms of biological role, this enzyme is involved in nucleotide metabolism: it produces dUMP, the immediate precursor of thymidine nucleotides and it decreases the intracellular concentration of dUTP so that uracil cannot be incorporated into DNA. The protein is Deoxyuridine 5'-triphosphate nucleotidohydrolase of Clostridioides difficile (Peptoclostridium difficile).